The primary structure comprises 1534 residues: DNA-directed RNA polymerase subunit beta'' (1534 aa).

Zn(2+) contacts are provided by C220, C296, C303, and C306. 2 stretches are compositionally biased toward basic and acidic residues: residues 644-668 and 678-688; these read RTQE…RTRE and PENKYRTREGE. Disordered regions lie at residues 644–698 and 719–800; these read RTQE…EDEY and YRTL…KKEG. 2 stretches are compositionally biased toward acidic residues: residues 744–762 and 770–789; these read GEYE…SSED and TLEE…EYGS.

This sequence belongs to the RNA polymerase beta' chain family. RpoC2 subfamily. In plastids the minimal PEP RNA polymerase catalytic core is composed of four subunits: alpha, beta, beta', and beta''. When a (nuclear-encoded) sigma factor is associated with the core the holoenzyme is formed, which can initiate transcription. Zn(2+) is required as a cofactor.

It localises to the plastid. The protein localises to the chloroplast. It carries out the reaction RNA(n) + a ribonucleoside 5'-triphosphate = RNA(n+1) + diphosphate. Its function is as follows. DNA-dependent RNA polymerase catalyzes the transcription of DNA into RNA using the four ribonucleoside triphosphates as substrates. This chain is DNA-directed RNA polymerase subunit beta'', found in Saccharum hybrid (Sugarcane).